The sequence spans 334 residues: Holliday junction branch migration complex subunit RuvB (334 aa).

The tract at residues 1 to 181 (MQDRLISGTE…FGIVQRLEFY (181 aa)) is large ATPase domain (RuvB-L). Residues Ile20, Arg21, Gly62, Lys65, Thr66, Thr67, 128–130 (EDY), Arg171, Tyr181, and Arg218 each bind ATP. Residue Thr66 participates in Mg(2+) binding. The tract at residues 182–252 (SVEDLTHIVS…MAQRALDMLN (71 aa)) is small ATPAse domain (RuvB-S). The tract at residues 255–334 (KAGLDTLDRR…FGMTPPEPKN (80 aa)) is head domain (RuvB-H). Residues Arg310 and Arg315 each coordinate DNA.

The protein belongs to the RuvB family. Homohexamer. Forms an RuvA(8)-RuvB(12)-Holliday junction (HJ) complex. HJ DNA is sandwiched between 2 RuvA tetramers; dsDNA enters through RuvA and exits via RuvB. An RuvB hexamer assembles on each DNA strand where it exits the tetramer. Each RuvB hexamer is contacted by two RuvA subunits (via domain III) on 2 adjacent RuvB subunits; this complex drives branch migration. In the full resolvosome a probable DNA-RuvA(4)-RuvB(12)-RuvC(2) complex forms which resolves the HJ.

It localises to the cytoplasm. The enzyme catalyses ATP + H2O = ADP + phosphate + H(+). Functionally, the RuvA-RuvB-RuvC complex processes Holliday junction (HJ) DNA during genetic recombination and DNA repair, while the RuvA-RuvB complex plays an important role in the rescue of blocked DNA replication forks via replication fork reversal (RFR). RuvA specifically binds to HJ cruciform DNA, conferring on it an open structure. The RuvB hexamer acts as an ATP-dependent pump, pulling dsDNA into and through the RuvAB complex. RuvB forms 2 homohexamers on either side of HJ DNA bound by 1 or 2 RuvA tetramers; 4 subunits per hexamer contact DNA at a time. Coordinated motions by a converter formed by DNA-disengaged RuvB subunits stimulates ATP hydrolysis and nucleotide exchange. Immobilization of the converter enables RuvB to convert the ATP-contained energy into a lever motion, pulling 2 nucleotides of DNA out of the RuvA tetramer per ATP hydrolyzed, thus driving DNA branch migration. The RuvB motors rotate together with the DNA substrate, which together with the progressing nucleotide cycle form the mechanistic basis for DNA recombination by continuous HJ branch migration. Branch migration allows RuvC to scan DNA until it finds its consensus sequence, where it cleaves and resolves cruciform DNA. This Acinetobacter baumannii (strain AB307-0294) protein is Holliday junction branch migration complex subunit RuvB.